A 256-amino-acid polypeptide reads, in one-letter code: Expansin-like B1 (256 aa).

The signal sequence occupies residues 1 to 24 (MAQLLRRHLPVILSLILFLSKATA). N27 carries an N-linked (GlcNAc...) asparagine glycan. The 105-residue stretch at 46-150 (NGACEYGAFG…RRVSCTYPNK (105 aa)) folds into the Expansin-like EG45 domain. The 86-residue stretch at 164–249 (NYLEFEIWYQ…NWTAGATYDS (86 aa)) folds into the Expansin-like CBD domain. 2 N-linked (GlcNAc...) asparagine glycosylation sites follow: N189 and N240.

Belongs to the expansin family. Expansin-like B subfamily.

The protein localises to the secreted. The polypeptide is Expansin-like B1 (EXLB1) (Oryza sativa subsp. japonica (Rice)).